Reading from the N-terminus, the 197-residue chain is Nucleoid occlusion factor SlmA (197 aa).

The region spanning 7–67 (INRREHILQC…GLIEFIEESL (61 aa)) is the HTH tetR-type domain. A DNA-binding region (H-T-H motif) is located at residues 30–49 (TTAKLASEVGVSEAALYRHF). Residues 109-136 (DALLGENERLRSRISNLFAKIETQLKQI) adopt a coiled-coil conformation.

It belongs to the nucleoid occlusion factor SlmA family. As to quaternary structure, homodimer. Interacts with FtsZ.

It is found in the cytoplasm. The protein localises to the nucleoid. In terms of biological role, required for nucleoid occlusion (NO) phenomenon, which prevents Z-ring formation and cell division over the nucleoid. Acts as a DNA-associated cell division inhibitor that binds simultaneously chromosomal DNA and FtsZ, and disrupts the assembly of FtsZ polymers. SlmA-DNA-binding sequences (SBS) are dispersed on non-Ter regions of the chromosome, preventing FtsZ polymerization at these regions. This Shewanella baltica (strain OS223) protein is Nucleoid occlusion factor SlmA.